The chain runs to 487 residues: Sodium-coupled neutral amino acid symporter 1 (487 aa).

Residues 1–74 (MMHFKSGLEL…EYIPGTTSLG (74 aa)) lie on the Cytoplasmic side of the membrane. The residue at position 6 (S6) is a Phosphoserine. Phosphothreonine is present on T11. Phosphoserine occurs at positions 25, 28, 49, and 52. Residue T54 is modified to Phosphothreonine. At S56 the chain carries Phosphoserine. Residues 75-97 (MSVFNLSNAIMGSGILGLAFALA) traverse the membrane as a helical segment. Residues 98-112 (NTGILLFLVLLTSVT) are Extracellular-facing. Residues 113 to 133 (LLSIYSINLLLICSKETGCMV) form a helical membrane-spanning segment. Topologically, residues 134–147 (YEKLGEQVFGTTGK) are cytoplasmic. Residues 148–168 (FVIFGATSLQNTGAMLSYLFI) form a helical membrane-spanning segment. The Extracellular segment spans residues 169 to 188 (VKNELPSAIKFLMGKEETFS). The chain crosses the membrane as a helical span at residues 189–211 (AWYVDGRVLVVIVTFGIILPLCL). Over 212–216 (LKNLG) the chain is Cytoplasmic. A helical membrane pass occupies residues 217–237 (YLGYTSGFSLSCMVFFLIVVI). The Extracellular segment spans residues 238–275 (YKKFQIPCIVPELNSTISANSTNADTCTPKYVTLNSKT). C245 and C264 are joined by a disulfide. N251 and N257 each carry an N-linked (GlcNAc...) asparagine glycan. Residues 276 to 296 (VYALPTIAFAFVCHPSVLPIY) traverse the membrane as a helical segment. Over 297–312 (SELKDRSQKKMQMVSN) the chain is Cytoplasmic. A helical membrane pass occupies residues 313–333 (ISFFAMFVMYFLTAIFGYLTF). Topologically, residues 334–350 (YDNVQSDLLHKYQGKDD) are extracellular. Residues 351–371 (ILILTVRLAVIVAVILTVPVL) traverse the membrane as a helical segment. Residues 372–393 (FFTVRSSLFELAKKTKFNLCRH) are Cytoplasmic-facing. The helical transmembrane segment at 394-414 (TVVTCILLVVINLLVISIPSM) threads the bilayer. The Extracellular portion of the chain corresponds to 415–416 (KD). Residues 417–437 (IFGVVGVTSANMLIFILPSSL) traverse the membrane as a helical segment. Topologically, residues 438-452 (YLKITDQDGDKGTQR) are cytoplasmic. The chain crosses the membrane as a helical span at residues 453–473 (IWAALFLGLGVLFSLVSIPLV). At 474–487 (IYDWACSSSSDEGH) the chain is on the extracellular side.

This sequence belongs to the amino acid/polyamine transporter 2 family. In terms of processing, N-glycosylation plays an important role in the L-glutamine transport.

The protein resides in the cell membrane. The catalysed reaction is L-glutamine(in) + Na(+)(in) = L-glutamine(out) + Na(+)(out). It catalyses the reaction L-alanine(in) + Na(+)(in) = L-alanine(out) + Na(+)(out). The enzyme catalyses L-asparagine(in) + Na(+)(in) = L-asparagine(out) + Na(+)(out). It carries out the reaction L-histidine(in) + Na(+)(in) = L-histidine(out) + Na(+)(out). The catalysed reaction is L-serine(in) + Na(+)(in) = L-serine(out) + Na(+)(out). It catalyses the reaction L-cysteine(in) + Na(+)(in) = L-cysteine(out) + Na(+)(out). The enzyme catalyses L-methionine(in) + Na(+)(in) = L-methionine(out) + Na(+)(out). It carries out the reaction glycine(in) + Na(+)(in) = glycine(out) + Na(+)(out). The catalysed reaction is L-threonine(in) + Na(+)(in) = L-threonine(out) + Na(+)(out). It catalyses the reaction L-proline(in) + Na(+)(in) = L-proline(out) + Na(+)(out). Its activity is regulated as follows. Inhibited by alpha-(methylamino)isobutyric acid (MeAIB). Inhibited by lithium, potassium, choline ions, N-methylglucamine. The pH dependence has an allosteric effect on the transport. Symporter that cotransports short-chain neutral amino acids and sodium ions from the extraccellular to the intracellular side of the cell membrane. The transport is elctrogenic, pH dependent and driven by the Na(+) electrochemical gradient. Participates in the astroglia-derived glutamine transport into GABAergic interneurons for neurotransmitter GABA de novo synthesis. May also contributes to amino acid transport in placental trophoblast. Regulates synaptic plasticity. The chain is Sodium-coupled neutral amino acid symporter 1 from Pongo abelii (Sumatran orangutan).